Reading from the N-terminus, the 160-residue chain is RNA pyrophosphohydrolase (160 aa).

One can recognise a Nudix hydrolase domain in the interval 10–154 (PYRKCVGVVL…KRDVYEQVFD (145 aa)). A Nudix box motif is present at residues 44-65 (GGIEDGEDARTAALRELVEETG).

It belongs to the Nudix hydrolase family. RppH subfamily. The cofactor is a divalent metal cation.

In terms of biological role, accelerates the degradation of transcripts by removing pyrophosphate from the 5'-end of triphosphorylated RNA, leading to a more labile monophosphorylated state that can stimulate subsequent ribonuclease cleavage. This Dinoroseobacter shibae (strain DSM 16493 / NCIMB 14021 / DFL 12) protein is RNA pyrophosphohydrolase.